Reading from the N-terminus, the 302-residue chain is Sulfate adenylyltransferase subunit 2 (302 aa).

The tract at residues 280–302 is disordered; that stretch reads RQGRVIDHDQAGSMEQKKREGYF.

This sequence belongs to the PAPS reductase family. CysD subfamily. As to quaternary structure, heterodimer composed of CysD, the smaller subunit, and CysN.

The enzyme catalyses sulfate + ATP + H(+) = adenosine 5'-phosphosulfate + diphosphate. Its pathway is sulfur metabolism; hydrogen sulfide biosynthesis; sulfite from sulfate: step 1/3. Functionally, with CysN forms the ATP sulfurylase (ATPS) that catalyzes the adenylation of sulfate producing adenosine 5'-phosphosulfate (APS) and diphosphate, the first enzymatic step in sulfur assimilation pathway. APS synthesis involves the formation of a high-energy phosphoric-sulfuric acid anhydride bond driven by GTP hydrolysis by CysN coupled to ATP hydrolysis by CysD. The chain is Sulfate adenylyltransferase subunit 2 from Hahella chejuensis (strain KCTC 2396).